A 354-amino-acid chain; its full sequence is Histidinol-phosphate aminotransferase (354 aa).

N6-(pyridoxal phosphate)lysine is present on Lys-210.

The protein belongs to the class-II pyridoxal-phosphate-dependent aminotransferase family. Histidinol-phosphate aminotransferase subfamily. As to quaternary structure, homodimer. Pyridoxal 5'-phosphate serves as cofactor.

It carries out the reaction L-histidinol phosphate + 2-oxoglutarate = 3-(imidazol-4-yl)-2-oxopropyl phosphate + L-glutamate. It participates in amino-acid biosynthesis; L-histidine biosynthesis; L-histidine from 5-phospho-alpha-D-ribose 1-diphosphate: step 7/9. The polypeptide is Histidinol-phosphate aminotransferase (Clostridium botulinum (strain ATCC 19397 / Type A)).